The sequence spans 436 residues: Protein GOLM2 (436 aa).

Position 1 is an N-acetylmethionine (Met-1). The Cytoplasmic portion of the chain corresponds to 1 to 14 (MVGFGANRRAGRLP). The helical; Signal-anchor for type II membrane protein transmembrane segment at 15–35 (SLVLVVLLVVIVVLAFNYWSI) threads the bilayer. A coiled-coil region spans residues 35-195 (ISSRHVLLQE…QFLQEQKQEA (161 aa)). Residues 36 to 436 (SSRHVLLQEE…YGKQHFNDVL (401 aa)) are Lumenal-facing. Composition is skewed to basic and acidic residues over residues 193–207 (QEAH…KELD) and 224–247 (VADK…KRGG). Residues 193-436 (QEAHKIQSND…YGKQHFNDVL (244 aa)) are disordered. Residues Ser-233 and Ser-275 each carry the phosphoserine modification. Polar residues-rich tracts occupy residues 275–295 (SVSQ…QPLS) and 305–321 (NHNG…SSPL). Phosphoserine is present on residues Ser-328 and Ser-332. Residues 344–362 (ATKDRVSDFHKLKQSRFFD) are compositionally biased toward basic and acidic residues. At Ser-366 the chain carries Phosphoserine. Positions 399 to 418 (YNEEEDGDGGEEDVQDDEER) are enriched in acidic residues. Over residues 426-436 (DYGKQHFNDVL) the composition is skewed to basic and acidic residues.

Belongs to the GOLM family.

Its subcellular location is the membrane. This is Protein GOLM2 (GOLM2) from Pongo abelii (Sumatran orangutan).